The sequence spans 90 residues: Small ribosomal subunit protein bS20 (90 aa).

The protein belongs to the bacterial ribosomal protein bS20 family.

Its function is as follows. Binds directly to 16S ribosomal RNA. This is Small ribosomal subunit protein bS20 from Rickettsia akari (strain Hartford).